The chain runs to 429 residues: Serine--tRNA ligase (429 aa).

235-237 provides a ligand contact to L-serine; sequence TAE. 266–268 is a binding site for ATP; that stretch reads RSE. Glutamate 289 contacts L-serine. 353-356 contacts ATP; the sequence is EISS. An L-serine-binding site is contributed by serine 389.

Belongs to the class-II aminoacyl-tRNA synthetase family. Type-1 seryl-tRNA synthetase subfamily. Homodimer. The tRNA molecule binds across the dimer.

The protein localises to the cytoplasm. It carries out the reaction tRNA(Ser) + L-serine + ATP = L-seryl-tRNA(Ser) + AMP + diphosphate + H(+). The catalysed reaction is tRNA(Sec) + L-serine + ATP = L-seryl-tRNA(Sec) + AMP + diphosphate + H(+). Its pathway is aminoacyl-tRNA biosynthesis; selenocysteinyl-tRNA(Sec) biosynthesis; L-seryl-tRNA(Sec) from L-serine and tRNA(Sec): step 1/1. Catalyzes the attachment of serine to tRNA(Ser). Is also able to aminoacylate tRNA(Sec) with serine, to form the misacylated tRNA L-seryl-tRNA(Sec), which will be further converted into selenocysteinyl-tRNA(Sec). This is Serine--tRNA ligase from Actinobacillus succinogenes (strain ATCC 55618 / DSM 22257 / CCUG 43843 / 130Z).